The following is a 179-amino-acid chain: Shikimate kinase (179 aa).

14–19 (GAGKTT) is a binding site for ATP. Thr-18 serves as a coordination point for Mg(2+). Substrate-binding residues include Asp-36, Arg-60, and Gly-82. Arg-120 lines the ATP pocket. Residue Arg-139 participates in substrate binding.

This sequence belongs to the shikimate kinase family. As to quaternary structure, monomer. Mg(2+) serves as cofactor.

Its subcellular location is the cytoplasm. The catalysed reaction is shikimate + ATP = 3-phosphoshikimate + ADP + H(+). It participates in metabolic intermediate biosynthesis; chorismate biosynthesis; chorismate from D-erythrose 4-phosphate and phosphoenolpyruvate: step 5/7. Functionally, catalyzes the specific phosphorylation of the 3-hydroxyl group of shikimic acid using ATP as a cosubstrate. The protein is Shikimate kinase of Methylococcus capsulatus (strain ATCC 33009 / NCIMB 11132 / Bath).